The primary structure comprises 552 residues: Chaperonin GroEL (552 aa).

Residues 30-33 (TLGP), lysine 51, 87-91 (DGTTT), glycine 415, 479-481 (NAA), and aspartate 495 contribute to the ATP site.

Belongs to the chaperonin (HSP60) family. In terms of assembly, forms a cylinder of 14 subunits composed of two heptameric rings stacked back-to-back. Interacts with the co-chaperonin GroES.

Its subcellular location is the cytoplasm. The catalysed reaction is ATP + H2O + a folded polypeptide = ADP + phosphate + an unfolded polypeptide.. In terms of biological role, together with its co-chaperonin GroES, plays an essential role in assisting protein folding. The GroEL-GroES system forms a nano-cage that allows encapsulation of the non-native substrate proteins and provides a physical environment optimized to promote and accelerate protein folding. In Stutzerimonas stutzeri (Pseudomonas stutzeri), this protein is Chaperonin GroEL.